Reading from the N-terminus, the 387-residue chain is Galactokinase (387 aa).

A substrate-binding site is contributed by 36-39; sequence EHTD. Residues Ser-70 and 125–131 each bind ATP; that span reads GAGLSSS. Mg(2+) contacts are provided by Ser-131 and Glu-163. The active-site Proton acceptor is Asp-175. Tyr-227 serves as a coordination point for substrate.

This sequence belongs to the GHMP kinase family. GalK subfamily.

The protein localises to the cytoplasm. It carries out the reaction alpha-D-galactose + ATP = alpha-D-galactose 1-phosphate + ADP + H(+). It participates in carbohydrate metabolism; galactose metabolism. Its function is as follows. Catalyzes the transfer of the gamma-phosphate of ATP to D-galactose to form alpha-D-galactose-1-phosphate (Gal-1-P). This Streptomyces coelicolor (strain ATCC BAA-471 / A3(2) / M145) protein is Galactokinase.